The following is a 471-amino-acid chain: Protoporphyrinogen oxidase (471 aa).

FAD is bound by residues 16-21, 39-40, alanine 47, 61-64, valine 251, tryptophan 408, and 446-448; these read GGGISG, ES, GPNS, and VGL.

This sequence belongs to the protoporphyrinogen/coproporphyrinogen oxidase family. Protoporphyrinogen oxidase subfamily. Monomer. Homodimer. FAD serves as cofactor.

It localises to the cytoplasm. The protein resides in the cell membrane. The catalysed reaction is protoporphyrinogen IX + 3 O2 = protoporphyrin IX + 3 H2O2. It functions in the pathway porphyrin-containing compound metabolism; protoporphyrin-IX biosynthesis; protoporphyrin-IX from protoporphyrinogen-IX: step 1/1. Its activity is regulated as follows. Strongly inhibited by acifluorfen. Functionally, catalyzes the 6-electron oxidation of protoporphyrinogen-IX to form protoporphyrin-IX. Does not oxidize coproporphyrinogen III. Involved in the classical protoporphyrin-dependent (PPD) heme b biosynthesis. This Myxococcus xanthus protein is Protoporphyrinogen oxidase.